Reading from the N-terminus, the 73-residue chain is MASRNSVTGFALFSFVFAVILSLAGAQSLAPAPAPTSDGTSIDQGIAYLLMVVALVLTYLIHPLDASSSYSFF.

Positions 1–26 (MASRNSVTGFALFSFVFAVILSLAGA) are cleaved as a signal peptide. Residue Q27 is modified to Pyrrolidone carboxylic acid. 4-hydroxyproline is present on residues P31, P33, and P35. O-linked (Ara...) hydroxyproline glycans are attached at residues P31, P33, and P35. The GPI-anchor amidated serine moiety is linked to residue S37. The propeptide at 38 to 73 (DGTSIDQGIAYLLMVVALVLTYLIHPLDASSSYSFF) is removed in mature form.

Belongs to the AG-peptide AGP family. Post-translationally, contains 4-hydroxyproline; hydroxylated on Pro-31, Pro-33 and Pro-35. O-glycosylated on hydroxyprolines; noncontiguous hydroxylproline residues are glycosylated with arabinogalactan. Predominantly expressed in flowers.

Its subcellular location is the cell membrane. In terms of biological role, proteoglycan that seems to be implicated in diverse developmental roles such as differentiation, cell-cell recognition, embryogenesis and programmed cell death. The polypeptide is Arabinogalactan protein 16 (Arabidopsis thaliana (Mouse-ear cress)).